Here is a 205-residue protein sequence, read N- to C-terminus: uncharacterized protein (205 aa).

Positions 1 to 18 (MKASLALLSLLTAFTSHS) are cleaved as a signal peptide.

This is an uncharacterized protein from Escherichia coli (strain K12).